A 174-amino-acid chain; its full sequence is Large ribosomal subunit protein uL16 (174 aa).

This sequence belongs to the universal ribosomal protein uL16 family.

The protein is Large ribosomal subunit protein uL16 of Methanocaldococcus jannaschii (strain ATCC 43067 / DSM 2661 / JAL-1 / JCM 10045 / NBRC 100440) (Methanococcus jannaschii).